A 103-amino-acid chain; its full sequence is Large ribosomal subunit protein bL21 (103 aa).

Belongs to the bacterial ribosomal protein bL21 family. As to quaternary structure, part of the 50S ribosomal subunit. Contacts protein L20.

In terms of biological role, this protein binds to 23S rRNA in the presence of protein L20. The chain is Large ribosomal subunit protein bL21 from Rhodococcus jostii (strain RHA1).